A 404-amino-acid chain; its full sequence is Glycerol-1-phosphate dehydrogenase [NAD(P)+] (404 aa).

NAD(+) is bound by residues Asp56, 118–122, and 140–143; these read GTIHD and TAPS. Asp145 is a binding site for substrate. Position 149 (Ser149) interacts with NAD(+). Residue Asp192 participates in substrate binding. Ni(2+)-binding residues include Asp192 and His272. His276 serves as a coordination point for substrate. A Ni(2+)-binding site is contributed by His292.

It belongs to the glycerol-1-phosphate dehydrogenase family. Homodimer. Ni(2+) serves as cofactor.

Its subcellular location is the cytoplasm. The catalysed reaction is sn-glycerol 1-phosphate + NAD(+) = dihydroxyacetone phosphate + NADH + H(+). The enzyme catalyses sn-glycerol 1-phosphate + NADP(+) = dihydroxyacetone phosphate + NADPH + H(+). Its function is as follows. Catalyzes the NAD(P)H-dependent reduction of dihydroxyacetonephosphate (DHAP or glycerone phosphate) to glycerol 1-phosphate (G1P). The G1P thus generated is probably used for the synthesis of phosphoglycerolipids in Gram-positive bacterial species. The chain is Glycerol-1-phosphate dehydrogenase [NAD(P)+] from Geobacillus stearothermophilus (Bacillus stearothermophilus).